A 66-amino-acid chain; its full sequence is Large ribosomal subunit protein uL29 (66 aa).

It belongs to the universal ribosomal protein uL29 family.

This is Large ribosomal subunit protein uL29 from Sinorhizobium fredii (strain NBRC 101917 / NGR234).